We begin with the raw amino-acid sequence, 269 residues long: Basic leucine zipper 19 (269 aa).

The region spanning 140-196 (DPKRVKRILANRQSAQRSRVRKLQYISELERSVTTLQMEVSALSPRVAFLDHQRSLL) is the bZIP domain. The segment at 142 to 161 (KRVKRILANRQSAQRSRVRK) is basic motif. Residues 168-196 (LERSVTTLQMEVSALSPRVAFLDHQRSLL) are leucine-zipper.

Expressed in roots and shoots.

The protein resides in the nucleus. Its function is as follows. Transcription regulator. The polypeptide is Basic leucine zipper 19 (BZIP19) (Oryza sativa subsp. japonica (Rice)).